A 353-amino-acid chain; its full sequence is UPF0283 membrane protein Spro_2618 (353 aa).

3 consecutive transmembrane segments (helical) span residues M71 to V91, I101 to V121, and E214 to W234.

Belongs to the UPF0283 family.

It localises to the cell inner membrane. This is UPF0283 membrane protein Spro_2618 from Serratia proteamaculans (strain 568).